The chain runs to 305 residues: UDP-3-O-acyl-N-acetylglucosamine deacetylase (305 aa).

Zn(2+)-binding residues include His79, His238, and Asp242. The active-site Proton donor is the His265.

It belongs to the LpxC family. Zn(2+) is required as a cofactor.

It carries out the reaction a UDP-3-O-[(3R)-3-hydroxyacyl]-N-acetyl-alpha-D-glucosamine + H2O = a UDP-3-O-[(3R)-3-hydroxyacyl]-alpha-D-glucosamine + acetate. Its pathway is glycolipid biosynthesis; lipid IV(A) biosynthesis; lipid IV(A) from (3R)-3-hydroxytetradecanoyl-[acyl-carrier-protein] and UDP-N-acetyl-alpha-D-glucosamine: step 2/6. Functionally, catalyzes the hydrolysis of UDP-3-O-myristoyl-N-acetylglucosamine to form UDP-3-O-myristoylglucosamine and acetate, the committed step in lipid A biosynthesis. The protein is UDP-3-O-acyl-N-acetylglucosamine deacetylase of Cronobacter sakazakii (strain ATCC BAA-894) (Enterobacter sakazakii).